A 147-amino-acid chain; its full sequence is Ponticulin-like protein C1 (147 aa).

Positions 1 to 20 are cleaved as a signal peptide; it reads MKFTKSLLLLIVAVFASSNA. The GPI-like-anchor amidated asparagine moiety is linked to residue Asn-118. Asn-118 carries an N-linked (GlcNAc...) asparagine glycan. Residues 119–147 constitute a propeptide, removed in mature form; that stretch reads SSESDSSDSTRIGASFALAASVLLSMLAI.

This sequence belongs to the ponticulin family. The GPI-like-anchor contains a phosphoceramide group, rather than a phosphatidyl group.

The protein resides in the cell membrane. This chain is Ponticulin-like protein C1 (ponC1), found in Dictyostelium discoideum (Social amoeba).